The following is a 260-amino-acid chain: Flap endonuclease Xni (260 aa).

D105 contributes to the Mg(2+) binding site. Residues 164 to 254 (SQFLDLLALA…LKDFRVNGPA (91 aa)) form the 5'-3' exonuclease domain. Residues L172, A173, P181, I183, and I186 each contribute to the K(+) site. The segment at 185-190 (GIGPKS) is interaction with DNA.

It belongs to the Xni family. The cofactor is Mg(2+). K(+) serves as cofactor.

Has flap endonuclease activity. During DNA replication, flap endonucleases cleave the 5'-overhanging flap structure that is generated by displacement synthesis when DNA polymerase encounters the 5'-end of a downstream Okazaki fragment. The protein is Flap endonuclease Xni of Shewanella sp. (strain ANA-3).